The primary structure comprises 542 residues: Chaperonin GroEL (542 aa).

Residues 29–32 (TLGP), 86–90 (DGTTT), Gly-413, 478–480 (DAL), and Asp-494 each bind ATP.

The protein belongs to the chaperonin (HSP60) family. As to quaternary structure, forms a cylinder of 14 subunits composed of two heptameric rings stacked back-to-back. Interacts with the co-chaperonin GroES.

Its subcellular location is the cytoplasm. It catalyses the reaction ATP + H2O + a folded polypeptide = ADP + phosphate + an unfolded polypeptide.. Functionally, together with its co-chaperonin GroES, plays an essential role in assisting protein folding. The GroEL-GroES system forms a nano-cage that allows encapsulation of the non-native substrate proteins and provides a physical environment optimized to promote and accelerate protein folding. This Clostridioides difficile (strain 630) (Peptoclostridium difficile) protein is Chaperonin GroEL.